We begin with the raw amino-acid sequence, 572 residues long: DnaJ protein ERDJ3A (572 aa).

An N-terminal signal peptide occupies residues 1-23 (MVRTRLAISVVLVSTLLLLNVKA). Residues 27–91 (DPYKVLGVSK…EKRKNYDLYG (65 aa)) form the J domain. Positions 394 to 423 (ITVKNLKSAVQELGKLLEGLEKKNKKVSSK) form a coiled coil. The disordered stretch occupies residues 419–439 (KVSSKSQAGQAPNESSEKIPL). Residues 422 to 432 (SKSQAGQAPNE) are compositionally biased toward polar residues. A glycan (N-linked (GlcNAc...) asparagine) is linked at Asn-431.

In terms of assembly, interacts with BIP1 and BIP3. The interaction with BIP1 and BIP3 activates the ATPase enzyme activities of BIP1 and BIP3. In terms of processing, not N-glycosylated. Expressed in roots, leaves, stems, flowers, mature pollen grains and growing pollen tubes.

The protein resides in the endoplasmic reticulum lumen. In terms of biological role, regulates protein folding in the endoplasmic reticulum (ER) lumen. Functions probably as a co-molecular chaperone that is required for normal growth of pollen tubes under high-temperature stress. This is DnaJ protein ERDJ3A (ERDJ3A) from Arabidopsis thaliana (Mouse-ear cress).